A 175-amino-acid polypeptide reads, in one-letter code: 2-oxo-4-hydroxy-4-carboxy-5-ureidoimidazoline decarboxylase (175 aa).

His67 serves as the catalytic Proton donor. Substrate is bound by residues Pro68, 84–88 (SRGEQ), and 119–123 (FVICA). The Microbody targeting signal signature appears at 173–175 (TKL).

It belongs to the OHCU decarboxylase family. Homodimer.

Its subcellular location is the peroxisome. It carries out the reaction 5-hydroxy-2-oxo-4-ureido-2,5-dihydro-1H-imidazole-5-carboxylate + H(+) = (S)-allantoin + CO2. It participates in purine metabolism; urate degradation; (S)-allantoin from urate: step 3/3. In terms of biological role, catalyzes the stereoselective decarboxylation of 2-oxo-4-hydroxy-4-carboxy-5-ureidoimidazoline (OHCU) to (S)-allantoin. This Amia calva (Bowfin) protein is 2-oxo-4-hydroxy-4-carboxy-5-ureidoimidazoline decarboxylase (urad).